A 198-amino-acid polypeptide reads, in one-letter code: Holliday junction branch migration complex subunit RuvA (198 aa).

The segment at 1-63 (MYDYIKGQLT…EDAHLLFGFH (63 aa)) is domain I. The segment at 64 to 142 (TEDEKDVFLK…EAPQETGHTK (79 aa)) is domain II. Residues 143–147 (ARSNK) are flexible linker. The segment at 148 to 198 (AGNTQLDEAIEALLALGYKAKELKKIRAFFEETSETAEQYIKSALKLLMKG) is domain III.

The protein belongs to the RuvA family. As to quaternary structure, homotetramer. Forms an RuvA(8)-RuvB(12)-Holliday junction (HJ) complex. HJ DNA is sandwiched between 2 RuvA tetramers; dsDNA enters through RuvA and exits via RuvB. An RuvB hexamer assembles on each DNA strand where it exits the tetramer. Each RuvB hexamer is contacted by two RuvA subunits (via domain III) on 2 adjacent RuvB subunits; this complex drives branch migration. In the full resolvosome a probable DNA-RuvA(4)-RuvB(12)-RuvC(2) complex forms which resolves the HJ.

Its subcellular location is the cytoplasm. Functionally, the RuvA-RuvB-RuvC complex processes Holliday junction (HJ) DNA during genetic recombination and DNA repair, while the RuvA-RuvB complex plays an important role in the rescue of blocked DNA replication forks via replication fork reversal (RFR). RuvA specifically binds to HJ cruciform DNA, conferring on it an open structure. The RuvB hexamer acts as an ATP-dependent pump, pulling dsDNA into and through the RuvAB complex. HJ branch migration allows RuvC to scan DNA until it finds its consensus sequence, where it cleaves and resolves the cruciform DNA. The sequence is that of Holliday junction branch migration complex subunit RuvA from Streptococcus pyogenes serotype M2 (strain MGAS10270).